The sequence spans 167 residues: NADH-ubiquinone oxidoreductase chain 6 (167 aa).

5 helical membrane passes run 1 to 21 (MVLM…VASN), 23 to 43 (SPYF…GMLM), 47 to 67 (MTFL…VVFA), 86 to 106 (VFSY…AFVG), and 133 to 153 (AGGY…LVVL).

This sequence belongs to the complex I subunit 6 family.

It localises to the mitochondrion membrane. It carries out the reaction a ubiquinone + NADH + 5 H(+)(in) = a ubiquinol + NAD(+) + 4 H(+)(out). Core subunit of the mitochondrial membrane respiratory chain NADH dehydrogenase (Complex I) that is believed to belong to the minimal assembly required for catalysis. Complex I functions in the transfer of electrons from NADH to the respiratory chain. The immediate electron acceptor for the enzyme is believed to be ubiquinone. This is NADH-ubiquinone oxidoreductase chain 6 (MT-ND6) from Polypterus ornatipinnis (Ornate bichir).